We begin with the raw amino-acid sequence, 118 residues long: Myotrophin (118 aa).

3 ANK repeats span residues 1-30, 34-65, and 67-98; these read MGDK…DVNR, GGRK…NAAD, and HGIT…NVKG.

Belongs to the myotrophin family.

It is found in the cytoplasm. Its subcellular location is the nucleus. The protein resides in the perinuclear region. Regulates NF-kappa-B transcription factor activity. Promotes growth of cardiomyocytes, but not cardiomyocyte proliferation. Promotes cardiac muscle hypertrophy. Plays a role in the regulation of the growth of actin filaments. Inhibits the activity of the F-actin-capping protein complex. This Xenopus laevis (African clawed frog) protein is Myotrophin (mtpn).